The chain runs to 539 residues: Protein Wnt-4 (539 aa).

An N-terminal signal peptide occupies residues 1–21 (MPSPTGVFVLMILTHLSFGLG). The tract at residues 34-77 (QNGDLDSSNPAIHHQQHQQHQQHQQHQQHQSNHNLNNGNMNSTI) is disordered. A compositionally biased stretch (low complexity) spans 51-74 (QQHQQHQQHQQHQSNHNLNNGNMN). N-linked (GlcNAc...) asparagine glycosylation is found at Asn74 and Asn284. Cystine bridges form between Cys274-Cys285, Cys322-Cys330, Cys332-Cys349, Cys397-Cys411, and Cys399-Cys406. Ser403 carries O-palmitoleoyl serine; by PORCN lipidation. The N-linked (GlcNAc...) asparagine glycan is linked to Asn419. The disordered stretch occupies residues 436–463 (APNQRSMRQVSSSRMKKPKQRRKKPQQS). Residues 439–448 (QRSMRQVSSS) show a composition bias toward low complexity. A compositionally biased stretch (basic residues) spans 449–460 (RMKKPKQRRKKP). Cystine bridges form between Cys478-Cys497, Cys486-Cys492, Cys496-Cys538, Cys512-Cys529, Cys514-Cys526, and Cys521-Cys522.

It belongs to the Wnt family. In terms of processing, palmitoleoylated by porcupine. The lipid group functions as a sorting signal, targeting the ligand to polarized vesicles that transport Wnt4 to unique sites at the cell surface. Depalmitoleoylated by notum, leading to inhibit Wnt signaling pathway.

The protein resides in the secreted. It is found in the extracellular space. Its subcellular location is the extracellular matrix. Functionally, binds as a ligand to a family of frizzled seven-transmembrane receptors and acts through a cascade of genes on the nucleus. Acts downstream of homeotic complex genes in the visceral mesoderm and is required for embryonic segmentation. Also required for cell movement and FAK regulation during ovarian morphogenesis. The polypeptide is Protein Wnt-4 (Wnt4) (Drosophila melanogaster (Fruit fly)).